The following is a 222-amino-acid chain: Probable fructose-6-phosphate aldolase (222 aa).

Lys87 (schiff-base intermediate with substrate) is an active-site residue.

This sequence belongs to the transaldolase family. Type 3A subfamily.

The protein localises to the cytoplasm. The enzyme catalyses beta-D-fructose 6-phosphate = dihydroxyacetone + D-glyceraldehyde 3-phosphate. Its function is as follows. Catalyzes the reversible formation of fructose 6-phosphate from dihydroxyacetone and D-glyceraldehyde 3-phosphate via an aldolization reaction. In Streptococcus pneumoniae (strain ATCC 700669 / Spain 23F-1), this protein is Probable fructose-6-phosphate aldolase.